The primary structure comprises 223 residues: Phosphoribosylformylglycinamidine synthase subunit PurQ (223 aa).

The 221-residue stretch at 3–223 folds into the Glutamine amidotransferase type-1 domain; that stretch reads FAVLVFPGSN…MVKSWREQHV (221 aa). Residue C85 is the Nucleophile of the active site. Catalysis depends on residues H193 and E195.

Part of the FGAM synthase complex composed of 1 PurL, 1 PurQ and 2 PurS subunits.

Its subcellular location is the cytoplasm. The catalysed reaction is N(2)-formyl-N(1)-(5-phospho-beta-D-ribosyl)glycinamide + L-glutamine + ATP + H2O = 2-formamido-N(1)-(5-O-phospho-beta-D-ribosyl)acetamidine + L-glutamate + ADP + phosphate + H(+). It carries out the reaction L-glutamine + H2O = L-glutamate + NH4(+). Its pathway is purine metabolism; IMP biosynthesis via de novo pathway; 5-amino-1-(5-phospho-D-ribosyl)imidazole from N(2)-formyl-N(1)-(5-phospho-D-ribosyl)glycinamide: step 1/2. Part of the phosphoribosylformylglycinamidine synthase complex involved in the purines biosynthetic pathway. Catalyzes the ATP-dependent conversion of formylglycinamide ribonucleotide (FGAR) and glutamine to yield formylglycinamidine ribonucleotide (FGAM) and glutamate. The FGAM synthase complex is composed of three subunits. PurQ produces an ammonia molecule by converting glutamine to glutamate. PurL transfers the ammonia molecule to FGAR to form FGAM in an ATP-dependent manner. PurS interacts with PurQ and PurL and is thought to assist in the transfer of the ammonia molecule from PurQ to PurL. The chain is Phosphoribosylformylglycinamidine synthase subunit PurQ from Staphylococcus aureus (strain bovine RF122 / ET3-1).